We begin with the raw amino-acid sequence, 1068 residues long: Phosphatidylinositol 4,5-bisphosphate 3-kinase catalytic subunit alpha isoform (1068 aa).

The region spanning 16–105 (MPPRILVECL…QPFLKVIEPV (90 aa)) is the PI3K-ABD domain. The PI3K-RBD domain maps to 187–289 (KGQIIVVIWV…GRMPNLMLMA (103 aa)). A C2 PI3K-type domain is found at 330–487 (INSALRIKIL…DWFSSVVKFP (158 aa)). The PIK helical domain maps to 517-694 (LARDNELREN…GLLLESYCRA (178 aa)). The region spanning 765 to 1051 (RLEECRIMSS…QMNDAHHGGW (287 aa)) is the PI3K/PI4K catalytic domain. Residues 771–777 (IMSSAKR) form a G-loop region. The interval 912–920 (GIGDRHNSN) is catalytic loop. Residues 931–957 (HIDFGHFLDHKKKKFGYKRERVPFVLT) are activation loop.

Belongs to the PI3/PI4-kinase family. As to quaternary structure, heterodimer of a catalytic subunit PIK3CA and a p85 regulatory subunit (PIK3R1, PIK3R2 or PIK3R3). Interacts with IRS1 in nuclear extracts. Interacts with RUFY3. Interacts with RASD2. Interacts with APPL1. Interacts with HRAS and KRAS. Interaction with HRAS/KRAS is required for PI3K pathway signaling and cell proliferation stimulated by EGF and FGF2. Interacts with FAM83B; activates the PI3K/AKT signaling cascade.

It catalyses the reaction a 1,2-diacyl-sn-glycero-3-phospho-(1D-myo-inositol-4,5-bisphosphate) + ATP = a 1,2-diacyl-sn-glycero-3-phospho-(1D-myo-inositol-3,4,5-trisphosphate) + ADP + H(+). The catalysed reaction is a 1,2-diacyl-sn-glycero-3-phospho-(1D-myo-inositol) + ATP = a 1,2-diacyl-sn-glycero-3-phospho-(1D-myo-inositol-3-phosphate) + ADP + H(+). The enzyme catalyses L-seryl-[protein] + ATP = O-phospho-L-seryl-[protein] + ADP + H(+). It carries out the reaction 1,2-dioctanoyl-sn-glycero-3-phospho-(1D-myo-inositol-4,5-bisphosphate) + ATP = 1,2-dioctanoyl-sn-glycero-3-phospho-(1D-myo-inositol-3,4,5-trisphosphate) + ADP + H(+). It catalyses the reaction 1-octadecanoyl-2-(5Z,8Z,11Z,14Z)-eicosatetraenoyl-sn-glycero-3-phospho-1D-myo-inositol 4,5-bisphosphate + ATP = 1-octadecanoyl-2-(5Z,8Z,11Z,14Z-eicosatetraenoyl)-sn-glycero-3-phospho-(1D-myo-inositol 3,4,5-triphosphate) + ADP + H(+). The protein operates within phospholipid metabolism; phosphatidylinositol phosphate biosynthesis. In terms of biological role, phosphoinositide-3-kinase (PI3K) phosphorylates phosphatidylinositol (PI) and its phosphorylated derivatives at position 3 of the inositol ring to produce 3-phosphoinositides. Uses ATP and PtdIns(4,5)P2 (phosphatidylinositol 4,5-bisphosphate) to generate phosphatidylinositol 3,4,5-trisphosphate (PIP3). PIP3 plays a key role by recruiting PH domain-containing proteins to the membrane, including AKT1 and PDPK1, activating signaling cascades involved in cell growth, survival, proliferation, motility and morphology. Participates in cellular signaling in response to various growth factors. Involved in the activation of AKT1 upon stimulation by receptor tyrosine kinases ligands such as EGF, insulin, IGF1, VEGFA and PDGF. Involved in signaling via insulin-receptor substrate (IRS) proteins. Essential in endothelial cell migration during vascular development through VEGFA signaling, possibly by regulating RhoA activity. Required for lymphatic vasculature development, possibly by binding to RAS and by activation by EGF and FGF2, but not by PDGF. Regulates invadopodia formation through the PDPK1-AKT1 pathway. Participates in cardiomyogenesis in embryonic stem cells through a AKT1 pathway. Participates in vasculogenesis in embryonic stem cells through PDK1 and protein kinase C pathway. In addition to its lipid kinase activity, it displays a serine-protein kinase activity that results in the autophosphorylation of the p85alpha regulatory subunit as well as phosphorylation of other proteins such as 4EBP1, H-Ras, the IL-3 beta c receptor and possibly others. Plays a role in the positive regulation of phagocytosis and pinocytosis. In Homo sapiens (Human), this protein is Phosphatidylinositol 4,5-bisphosphate 3-kinase catalytic subunit alpha isoform (PIK3CA).